Consider the following 289-residue polypeptide: Shikimate kinase (289 aa).

Position 84–94 (proline 84–alanine 94) interacts with ATP.

It belongs to the GHMP kinase family. Archaeal shikimate kinase subfamily.

The protein localises to the cytoplasm. The enzyme catalyses shikimate + ATP = 3-phosphoshikimate + ADP + H(+). It participates in metabolic intermediate biosynthesis; chorismate biosynthesis; chorismate from D-erythrose 4-phosphate and phosphoenolpyruvate: step 5/7. The polypeptide is Shikimate kinase (aroK) (Methanothermobacter thermautotrophicus (strain ATCC 29096 / DSM 1053 / JCM 10044 / NBRC 100330 / Delta H) (Methanobacterium thermoautotrophicum)).